The chain runs to 195 residues: MRTAEIIRNTNETRIRVAVNLDGTGKQSIDTGVPFLDHMLDQIARHGLVDLDIKAEGDLHIDAHHTVEDVGITLGMAIAKAIGNKAGLRRYGHAYVPLDEALSRVVIDFSGRPGLEYHIDFTRARIGDFDVDLTREFFQGLVNHALMTLHIDNLRGFNAHHQAETVFKAFGRALRMAMEVDPRMGDAIPSTKGVL.

It belongs to the imidazoleglycerol-phosphate dehydratase family.

It localises to the cytoplasm. It carries out the reaction D-erythro-1-(imidazol-4-yl)glycerol 3-phosphate = 3-(imidazol-4-yl)-2-oxopropyl phosphate + H2O. It functions in the pathway amino-acid biosynthesis; L-histidine biosynthesis; L-histidine from 5-phospho-alpha-D-ribose 1-diphosphate: step 6/9. The sequence is that of Imidazoleglycerol-phosphate dehydratase from Bordetella avium (strain 197N).